A 73-amino-acid polypeptide reads, in one-letter code: N-terminal-borealin-like protein (73 aa).

This sequence belongs to the borealin family. Component of the aurora kinase complex composed of at least BIR1, BNL1, IPL1 and SLI15.

It localises to the nucleus. It is found in the cytoplasm. Its subcellular location is the cytoskeleton. The protein localises to the spindle. Component of the aurora kinase complex, also called chromosomal passenger complex (CPC), essential for chromosome segregation and metaphase chromosome alignment. Mediates the SLI15-BIR1 interaction within the CPC. The protein is N-terminal-borealin-like protein (NBL1) of Saccharomyces cerevisiae (strain ATCC 204508 / S288c) (Baker's yeast).